A 160-amino-acid chain; its full sequence is Cyclic pyranopterin monophosphate synthase (160 aa).

Substrate contacts are provided by residues 76-78 (MCH) and 113-114 (ME). Aspartate 128 is an active-site residue.

The protein belongs to the MoaC family. In terms of assembly, homohexamer; trimer of dimers.

The enzyme catalyses (8S)-3',8-cyclo-7,8-dihydroguanosine 5'-triphosphate = cyclic pyranopterin phosphate + diphosphate. The protein operates within cofactor biosynthesis; molybdopterin biosynthesis. Its function is as follows. Catalyzes the conversion of (8S)-3',8-cyclo-7,8-dihydroguanosine 5'-triphosphate to cyclic pyranopterin monophosphate (cPMP). The chain is Cyclic pyranopterin monophosphate synthase from Brevibacillus brevis (strain 47 / JCM 6285 / NBRC 100599).